Reading from the N-terminus, the 183-residue chain is Translation initiation factor IF-3 (183 aa).

Belongs to the IF-3 family. As to quaternary structure, monomer.

It localises to the cytoplasm. IF-3 binds to the 30S ribosomal subunit and shifts the equilibrium between 70S ribosomes and their 50S and 30S subunits in favor of the free subunits, thus enhancing the availability of 30S subunits on which protein synthesis initiation begins. The sequence is that of Translation initiation factor IF-3 from Pseudomonas syringae pv. tomato (strain ATCC BAA-871 / DC3000).